We begin with the raw amino-acid sequence, 217 residues long: Probable glutathione S-transferase (217 aa).

The 80-residue stretch at 2–81 folds into the GST N-terminal domain; it reads AEVKLLGLRY…YIDEAFEGPS (80 aa). Residues Ser12, Lys39, Ile53, and 65–66 contribute to the glutathione site; that span reads ES. The GST C-terminal domain occupies 86–210; that stretch reads DPYDRALARF…ELLIRYRAYI (125 aa).

This sequence belongs to the GST superfamily. HSP26 family.

The catalysed reaction is RX + glutathione = an S-substituted glutathione + a halide anion + H(+). In Solanum tuberosum (Potato), this protein is Probable glutathione S-transferase (PRP1).